Consider the following 90-residue polypeptide: Auxin-responsive protein SAUR22 (90 aa).

It belongs to the ARG7 family.

It is found in the cell membrane. Functions as a positive effector of cell expansion through modulation of auxin transport. This Arabidopsis thaliana (Mouse-ear cress) protein is Auxin-responsive protein SAUR22.